We begin with the raw amino-acid sequence, 251 residues long: MSEGTPNSTHFGYKTVESDQKADMVAGVFHSVAAKYDIMNDVMSFGIHRMWKRFTIESAGARPGMKVLDLAGGTGDLTAKFSHIVGDKGQVTLADINDSMLKVGREKLRDKGIVGNVNYVQANAEALPFPDNHFDIITIAFGLRNVTDKDAAIRSMLRVLKPGGKLLVLEFSKPKHDVMRKVYDLYSFKVMPKMGALITQDAESYEYLAESIRMHPDQETLKGMMVDAGFEQVEYTNMTDGIVALHKGYKF.

Residues T74, D95, and 123–124 (NA) contribute to the S-adenosyl-L-methionine site.

This sequence belongs to the class I-like SAM-binding methyltransferase superfamily. MenG/UbiE family.

It catalyses the reaction a 2-demethylmenaquinol + S-adenosyl-L-methionine = a menaquinol + S-adenosyl-L-homocysteine + H(+). The enzyme catalyses a 2-methoxy-6-(all-trans-polyprenyl)benzene-1,4-diol + S-adenosyl-L-methionine = a 5-methoxy-2-methyl-3-(all-trans-polyprenyl)benzene-1,4-diol + S-adenosyl-L-homocysteine + H(+). Its pathway is quinol/quinone metabolism; menaquinone biosynthesis; menaquinol from 1,4-dihydroxy-2-naphthoate: step 2/2. It participates in cofactor biosynthesis; ubiquinone biosynthesis. Methyltransferase required for the conversion of demethylmenaquinol (DMKH2) to menaquinol (MKH2) and the conversion of 2-polyprenyl-6-methoxy-1,4-benzoquinol (DDMQH2) to 2-polyprenyl-3-methyl-6-methoxy-1,4-benzoquinol (DMQH2). This Shewanella woodyi (strain ATCC 51908 / MS32) protein is Ubiquinone/menaquinone biosynthesis C-methyltransferase UbiE.